A 250-amino-acid chain; its full sequence is tRNA (guanine-N(1)-)-methyltransferase (250 aa).

S-adenosyl-L-methionine-binding positions include G116 and 136-141 (IGDYVL).

Belongs to the RNA methyltransferase TrmD family. Homodimer.

Its subcellular location is the cytoplasm. It carries out the reaction guanosine(37) in tRNA + S-adenosyl-L-methionine = N(1)-methylguanosine(37) in tRNA + S-adenosyl-L-homocysteine + H(+). Functionally, specifically methylates guanosine-37 in various tRNAs. The protein is tRNA (guanine-N(1)-)-methyltransferase of Pseudomonas syringae pv. tomato (strain ATCC BAA-871 / DC3000).